A 465-amino-acid polypeptide reads, in one-letter code: Protein Loquacious (465 aa).

The tract at residues 1–337 is necessary for enhancing pre-miRNA processing by Dcr-1; that stretch reads MDQENFHGSS…DSICGELEGE (337 aa). A not required for interaction with Dcr-1 region spans residues 1-379; it reads MDQENFHGSS…TLKNATGKKL (379 aa). The important for homodimerization and interaction with Dcr-1 stretch occupies residues 1 to 392; the sequence is MDQENFHGSS…QKTCLKNNKI (392 aa). The sufficient for binding RNA stretch occupies residues 129–211; that stretch reads NGLAMKTPVS…DKLIGAQLPE (83 aa). Residues 129–322 form a necessary for promoting preferential binding of Dcr-2 to the less stably base paired ends of siRNAs region; that stretch reads NGLAMKTPVS…WMRLQETPID (194 aa). The DRBM 1 domain occupies 135 to 206; sequence TPVSILQELL…ARALIDKLIG (72 aa). Residues 209 to 249 form an enables simultaneous binding of both DRBM 1 and 2 domains to dsRNA region; that stretch reads LPESPSSSAGPSVTGLTVAGSGGDGNANATGGGDASDKTVG. Residues 210-246 are disordered; sequence PESPSSSAGPSVTGLTVAGSGGDGNANATGGGDASDK. The segment covering 211-223 has biased composition (polar residues); that stretch reads ESPSSSAGPSVTG. Residues 220–465 are necessary and sufficient for enhancing processing of pre-miRNAs by Dcr-1; the sequence is SVTGLTVAGS…LEYLKIMTKK (246 aa). A compositionally biased stretch (gly residues) spans 228 to 242; it reads GSGGDGNANATGGGD. The segment at 245-322 is sufficient for binding RNA; the sequence is DKTVGNPIGW…WMRLQETPID (78 aa). The DRBM 2 domain maps to 250–318; the sequence is NPIGWLQEMC…AHRMWMRLQE (69 aa). A necessary for binding pre-miRNA region spans residues 308–309; that stretch reads AA. The interval 338–359 is required for binding to Dcr-2 and to fully enhance Dcr-2 mediated cleavage of 3' overhanging termini (3'ovr) and blunt termini (BLT) dsRNAs. However, this region is dispensable for binding the dsRNA substrates; the sequence is PRSSENYYGELKDISVPTLTTQ. The necessary for interaction with Dcr-1 stretch occupies residues 340–465; the sequence is SSENYYGELK…LEYLKIMTKK (126 aa). The segment at 392–463 is sufficent for binding to Dcr-1; sequence IDYIKLLGEI…NALEYLKIMT (72 aa). The region spanning 393-461 is the DRBM 3 domain; it reads DYIKLLGEIA…AQNALEYLKI (69 aa).

In terms of assembly, homodimer. As to quaternary structure, interacts with dicer enzyme Dcr-1. Component of the miRNA-directed RNA-induced loading complex (miRLC), composed of at least Dcr-1, AGO1 and loqs isoform PB (loqs-PB), which processes pre-miRNAs and loads the resulting miRNAs into the Argonaute 1 (AGO1)-containing RNA-induced silencing complex (miRISC) to target the selective destruction of homologous RNAs. Interacts (via DRBM 3 domain) with dicer enzyme Dcr-1 (via helicase domain). Different regions of the Dcr-1-loqs-PB heterodimer collaborate to recognize, bind and position the pre-miRNA for Dcr-1 mediated cleavage. In the absence of miRNA substrates, the heterodimer favors a closed, catalytically incompetent, conformation, whereas binding of authentic pre-miRNA substrates stabilizes the relatively rare open, catalytically competent, conformation of the heterodimer. During substrate recognition, the Dcr-1 PAZ domain and pre-miRNA interact with the DRBM 1 domain of loqs-PB, which likely contributes to substrate recognition and stabilization. At the miRNA binding stage, the Dcr-1 DRBM domain and the loqs-PB DRBM domains then bind the pre-miRNA in tandem to form a tight 'belt' around the pre-miRNA stem, the pre-miRNA loop is docked in the loop-binding region formed by DUF283, DRBM and part of the helicase domain of Dcr-1, and the loqs-PB DRBM 1 and the wing domain of Dcr-1 act together to bind the 5' and 3' pre-miRNA termini within the PAZ and platform domains of Dcr-1. These interactions between the proteins and their pre-miRNA substrate stabilize a distorted form of the pre-miRNA and position the scissile phosphodiester bonds of the pre-miRNA at the RNase III catalytic cleavage sites of Dcr-1. Following Dcr-1 mediated cleavage, the miRNA duplex remains bound to loqs-PB DRBM 1, which dissociates from the Dcr-1 RNase III 1 domain but remains in contact with the PAZ and wing domains suggesting that the heterodimer presents the mature miRNA to AGO2 for loading into the RNA-induced silencing complex (miRISC). In terms of assembly, able to interact with dicer enzyme Dcr-1. However, the relevance of such an interaction is unclear in vivo and another report found that it did not interact with Dcr-1. As to quaternary structure, monomer. Interacts (via C-terminus) with dicer enzyme Dcr-2 (via N-terminus); interaction is required for RNAi activity in producing siRNAs from a subset of endo- and exo-dsRNAs, and in the alternative siRLC, the interaction enhances the binding preference of the protein for the thermodynamically more stable ends of endogenous siRNAs. Interaction with Dcr-2 is RNA independent, however the isoform must bind both dsRNA and Dcr-2 to enhance Dcr-2 cleavage activity. Does not interact with Dcr-1. As to expression, strong expression in males and females. Expression in ovaries is relatively weak. Strong expression in females and relatively weak expression in males. Strong expression in ovaries.

Its subcellular location is the cytoplasm. The protein localises to the cytosol. In terms of biological role, double-stranded RNA-binding protein which can function in gene silencing by acting with Dcr-1 to enhance its ATP-independent processing of a specific subset of precursor micro-RNAs (pre-miRNAs) to mature miRNAs. Some reports found it was able to enhance the efficiency of pre-miRNA processing by Dcr-1, and can shift the cleavage site of Dcr-1 altering the length of the mature miRNAs produced by Dcr-1 alone. However, in contrast to isoform PB, it is not necessary or sufficient for enhancing miRNA biogenesis, and is not required for development or female germline stem cell (GSC) maintenance. Another report also found that it decreases binding of Dcr-1 to the miRNA substrate let-7. Double-stranded RNA-binding protein which functions in gene silencing by acting with Dcr-1 to enhance its ATP-independent processing of a specific subset of precursor micro-RNAs (pre-miRNAs) to mature miRNAs. Function is essential for development and female germline stem cell (GSC) maintenance. Functions in miRNA-mediated gene silencing by enhancing the binding affinity and specific pre-miRNA processing activity of Dcr-1, and as part of the loqs-PB-Dcr-1 complex, is involved in substrate discrimination, correctly positioning the pre-miRNA in the Dcr-1 catalytic center for cleavage, and miRNA loading into the Argonaute 1 (Ago1)-containing RNA-induced silencing complex (miRISC). Increases the binding affinity of Dcr-1 to pre-miRNAs, thereby increasing dicing efficiency and broadening the range of substrates that can be processed by the dicer. It may also confer the substrate specificity of Dcr-1 towards pre-miRNAs, as in its absence Dcr-1 displays siRNA-generating activity towards long dsRNA substrates. It can also shift the cleavage site of Dcr-1 for a small number of pre-miRNAs, changing the length of the mature miRNAs produced by Dcr-1 alone. Increases the range of pre-miRNAs that can be processed by Dcr-1, by enhancing the dicing of suboptimal hairpin substrates including ones with mismatches at the dicing site. This function may also promote the generation of novel miRNA genes as it appears to have an important role in processing evolutionarily young miRNA genes, suggesting that it may also enhance dicing of substrates that have not acquired hairpin features required for efficient miRNA processing. As newly emerged miRNAs can have deleterious or beneficial effects on fitness, this function is likely part of a regulatory system that prevents excessive emergence of active miRNA genes and thus keeps them within an optimal range. Also forms a RISC loading complex (miRLC) with Dcr-1 to mediate Ago1-loading of mature miRNAs into the RNA-induced silencing complex (miRISC). In female ovaries, required for Dcr-1 to generate the twenty-three nucleotide isomiR variant of miR-307a which is able to repress its targets Gk2 and tara. Functionally, double-stranded RNA-binding protein which has an essential role in gene silencing (RNAi) by acting with Dcr-2 to enhance its ATP-dependent processing of a subset of endogenous (endo) and exogenous (exo) dsRNAs into short interfering RNAs (siRNAs). Functions in RNAi by increasing the initial binding affinity of Dcr-2 to certain dsRNA substrates, and in the absence of r2d2, may also function in siRNA loading into the Argonaute 2 (AGO2)-containing RNA-induced silencing complex (siRISC) and guide strand selection for target silencing by the siRISC. Promotes Dcr-2 cleavage of a subset of dsRNAs, including endo-dsRNAs derived from convergent transcription, inverted repeats and transposons. Also enables Dcr-2 to produce hairpin-derived endo-siRNAs in the presence of cellular inhibitory inorganic phosphate, likely by increasing the binding affinity of the enzyme to the hairpin dsRNAs allowing the dsRNA to displace phosphate bound to Dcr-2. According to many reports, the cleavage reaction mode of Dcr-2 changes according to the termini of the dsRNA substrate, with the enzyme displaying a preference for processing blunt termini (BLT), likely non-self dsRNAs, over dsRNAs with 2 nucleotides 3' overhanging (3'ovr) termini, which are typically the structure of endo-dsRNAs. According to many reports, interaction with Loqs-PD modifies the molecular recognition mechanisms of Dcr-2 towards sub-optimal 3'ovr dsRNA substrates and thus enables the dicer to cleave endo-dsRNA templates with diverse termini. However, according to another report, the mode of cleavage reaction is not affected by the presence or absence of loqs-PD. In the absence of r2d2, may also form an alternative RISC loading complex (siRLC) with Dcr-2 to mediate AGO2-loading of endo- and exo-siRNAs into the RNA-induced silencing complex (siRISC). Many reports suggest that loqs-PD and r2d2 function independently with dcr-2 in distinct siRNA pathways, and may even compete for binding to the enzyme. Loaded siRNAs serve as a guide to direct the siRISC to complementary RNAs to degrade them or prevent their translation. The siRLC plays an important role in the ATP-dependent asymmetry sensing of the duplex, and is therefore also responsible for the selection of the strand that ultimately acts as the guide siRNA for the siRISC. Thermodynamically asymmetric endo-siRNAs can be pre-oriented in the siRLC by the Loqs-PD and DCr-2 complex, which preferentially binds to the most thermodynamically stable strand prior to loading into the siRISC. Appears to be involved in promoting double-strand breaks (DSBs) following exposure to a low-dose/dose-rate (LDR) of ionizing radiation. This Drosophila melanogaster (Fruit fly) protein is Protein Loquacious.